Here is a 745-residue protein sequence, read N- to C-terminus: Junction plakoglobin (745 aa).

N-acetylmethionine is present on Met-1. O-linked (GlcNAc) threonine glycosylation occurs at Thr-14. Phosphoserine is present on residues Ser-99 and Ser-125. ARM repeat units lie at residues 132–171, 172–215, 216–255, 258–297, 298–341, 342–381, 383–420, 423–464, 470–510, 512–551, 574–613, and 615–661; these read NYQD…QLSK, KEAS…LSHH, REGL…NLLL, EGAK…LLAY, GNQE…LSVC, PSNK…NLSD, ATKQ…NLTC, SKNK…HLTS, EMAQ…NLAL, PANH…QPYT, PMNR…ELAQ, and KEAA…PDYR. The interaction with DSC1 and DSG1 stretch occupies residues 132 to 297; it reads NYQDDAELAT…TTDCLQLLAY (166 aa). The residue at position 182 (Ser-182) is a Phosphoserine. An interaction with DSC1 region spans residues 574–661; it reads PMNRMEIFRL…ISEDKNPDYR (88 aa). Ser-665 and Ser-730 each carry phosphoserine.

This sequence belongs to the beta-catenin family. As to quaternary structure, homodimer. Component of an E-cadherin/catenin adhesion complex composed of at least E-cadherin/CDH1 and gamma-catenin/JUP, and possibly alpha-catenin/CTNNA1; the complex is located to adherens junctions. The stable association of CTNNA1 is controversial as CTNNA1 was shown not to bind to F-actin when assembled in the complex. Interacts with MUC1. Interacts with CAV1. Interacts with PTPRJ. Interacts with DSG1. Interacts with DSC1 and DSC2. Interacts with PKP2. Interacts with PKP3 (via N-terminus); the interaction is required for PKP3 localization to desmosome cell-cell junctions. Interacts with DSG4. Post-translationally, may be phosphorylated by FER. Expressed in the mammary epithelium (at protein level).

Its subcellular location is the cell junction. The protein resides in the adherens junction. It localises to the desmosome. It is found in the cytoplasm. The protein localises to the cytoskeleton. Its subcellular location is the cell membrane. The protein resides in the nucleus. In terms of biological role, common junctional plaque protein. The membrane-associated plaques are architectural elements in an important strategic position to influence the arrangement and function of both the cytoskeleton and the cells within the tissue. The presence of plakoglobin in both the desmosomes and in the intermediate junctions suggests that it plays a central role in the structure and function of submembranous plaques. Acts as a substrate for VE-PTP and is required by it to stimulate VE-cadherin function in endothelial cells. Can replace beta-catenin in E-cadherin/catenin adhesion complexes which are proposed to couple cadherins to the actin cytoskeleton. In Mus musculus (Mouse), this protein is Junction plakoglobin.